The chain runs to 315 residues: Putative methyltransferase NSUN5C (315 aa).

S-adenosyl-L-methionine-binding positions include 50–56 (VPPQAIK), aspartate 74, arginine 79, and aspartate 121. Residue cysteine 175 is the Nucleophile of the active site. Residues 245–269 (TSASQAKASAPERTPSPAPKRKKRA) are disordered.

This sequence belongs to the class I-like SAM-binding methyltransferase superfamily. RsmB/NOP family. In terms of tissue distribution, ubiquitous.

May have S-adenosyl-L-methionine-dependent methyl-transferase activity. This is Putative methyltransferase NSUN5C (NSUN5P2) from Homo sapiens (Human).